Here is a 72-residue protein sequence, read N- to C-terminus: V-type proton ATPase subunit e (72 aa).

The Lumenal portion of the chain corresponds to 1–2; sequence MS. The chain crosses the membrane as a helical span at residues 3–23; sequence FYTVVATFLSVVLASAVFWVL. Residues 24 to 34 lie on the Cytoplasmic side of the membrane; it reads APKENQTVWRS. A helical transmembrane segment spans residues 35 to 55; that stretch reads TIILSMSMMFLMWAVTYLSQL. At 56–72 the chain is on the lumenal side; the sequence is HPLVVPRRSDLRPEFAE.

It belongs to the V-ATPase e1/e2 subunit family. As to quaternary structure, V-ATPase is a heteromultimeric enzyme composed of a peripheral catalytic V1 complex (components A to H) attached to an integral membrane V0 proton pore complex (components: a, c, c', c'', d, e, f and VOA1).

It localises to the vacuole membrane. In terms of biological role, subunit of the V0 complex of vacuolar(H+)-ATPase (V-ATPase), a multisubunit enzyme composed of a peripheral complex (V1) that hydrolyzes ATP and a membrane integral complex (V0) that translocates protons. V-ATPase is responsible for acidifying and maintaining the pH of intracellular compartments. In Eremothecium gossypii (strain ATCC 10895 / CBS 109.51 / FGSC 9923 / NRRL Y-1056) (Yeast), this protein is V-type proton ATPase subunit e (VMA9).